The following is a 317-amino-acid chain: Large ribosomal subunit protein uL10z (317 aa).

Belongs to the universal ribosomal protein uL10 family. P0 forms a pentameric complex by interaction with dimers of P1 and P2. Post-translationally, phosphorylated.

Its function is as follows. Ribosomal protein P0 is the functional equivalent of E.coli protein L10. The protein is Large ribosomal subunit protein uL10z (RPP0A) of Arabidopsis thaliana (Mouse-ear cress).